The following is a 275-amino-acid chain: NH(3)-dependent NAD(+) synthetase (275 aa).

ATP is bound at residue 46 to 53 (GISGGQDS). D52 contributes to the Mg(2+) binding site. R140 contributes to the deamido-NAD(+) binding site. T160 contacts ATP. A Mg(2+)-binding site is contributed by E165. 2 residues coordinate deamido-NAD(+): K173 and D180. 2 residues coordinate ATP: K189 and T211. 260 to 261 (HK) is a deamido-NAD(+) binding site.

This sequence belongs to the NAD synthetase family. As to quaternary structure, homodimer.

The enzyme catalyses deamido-NAD(+) + NH4(+) + ATP = AMP + diphosphate + NAD(+) + H(+). The protein operates within cofactor biosynthesis; NAD(+) biosynthesis; NAD(+) from deamido-NAD(+) (ammonia route): step 1/1. Its function is as follows. Catalyzes the ATP-dependent amidation of deamido-NAD to form NAD. Uses ammonia as a nitrogen source. The chain is NH(3)-dependent NAD(+) synthetase from Shigella boydii serotype 18 (strain CDC 3083-94 / BS512).